A 163-amino-acid polypeptide reads, in one-letter code: Nucleotide-binding protein DvMF_3058 (163 aa).

The protein belongs to the YajQ family.

Functionally, nucleotide-binding protein. This chain is Nucleotide-binding protein DvMF_3058, found in Nitratidesulfovibrio vulgaris (strain DSM 19637 / Miyazaki F) (Desulfovibrio vulgaris).